A 327-amino-acid chain; its full sequence is GMP reductase (327 aa).

Cys176 acts as the Thioimidate intermediate in catalysis. Position 205-228 (205-228 (IIADGGIRTHGDIAKSIRFGASMV)) interacts with NADP(+).

This sequence belongs to the IMPDH/GMPR family. GuaC type 2 subfamily.

It carries out the reaction IMP + NH4(+) + NADP(+) = GMP + NADPH + 2 H(+). Functionally, catalyzes the irreversible NADPH-dependent deamination of GMP to IMP. It functions in the conversion of nucleobase, nucleoside and nucleotide derivatives of G to A nucleotides, and in maintaining the intracellular balance of A and G nucleotides. The protein is GMP reductase of Streptococcus pyogenes serotype M3 (strain ATCC BAA-595 / MGAS315).